We begin with the raw amino-acid sequence, 154 residues long: MAKAVAVLRGDSKVSGVVNFEQSSESDPTTITWEISGNDANALRGFHVHTFGDNTNGCTSAGPHFNPFTKEHGAPEDDNRHVGDLGNVTTDTSGVAKGSKQDLFVKLIGQNSILGRTVVIHAGTDDLGKGGNAESKKTGNAGARPACGVIGLSE.

The Cu cation site is built by H47, H49, and H64. A disulfide bridge links C58 with C147. The Zn(2+) site is built by H64, H72, H81, and D84. H121 contributes to the Cu cation binding site. Position 144 (R144) interacts with substrate.

The protein belongs to the Cu-Zn superoxide dismutase family. Homodimer. The cofactor is Cu cation. Requires Zn(2+) as cofactor.

Its subcellular location is the cytoplasm. The enzyme catalyses 2 superoxide + 2 H(+) = H2O2 + O2. Its function is as follows. Destroys radicals which are normally produced within the cells and which are toxic to biological systems. This Debaryomyces hansenii (strain ATCC 36239 / CBS 767 / BCRC 21394 / JCM 1990 / NBRC 0083 / IGC 2968) (Yeast) protein is Superoxide dismutase [Cu-Zn] 1 (SOD1).